Reading from the N-terminus, the 524-residue chain is Serine/threonine-protein kinase PAK 2 (524 aa).

The interval 1–81 (MSDNGELEDK…PEISPPSDFE (81 aa)) is disordered. N-acetylserine is present on Ser-2. Residues Ser-2, Ser-20, Ser-55, and Ser-58 each carry the phosphoserine modification. Thr-60 is modified (phosphothreonine). The residue at position 62 (Lys-62) is an N6-acetyllysine. The residue at position 64 (Ser-64) is a Phosphoserine. Residues 67–81 (KEKERPEISPPSDFE) show a composition bias toward basic and acidic residues. The segment at 69 to 112 (KERPEISPPSDFEHTIHVGFDAVTGEFTGMPEQWARLLQTSNIT) is GTPase-binding. The segment at 69 to 137 (KERPEISPPS…KFYDSNTVKQ (69 aa)) is autoregulatory region. Positions 74–87 (ISPPSDFEHTIHVG) constitute a CRIB domain. An N6-acetyllysine modification is found at Lys-128. At Thr-134 the chain carries Phosphothreonine. Position 139 is a phosphotyrosine (Tyr-139). The residue at position 141 (Ser-141) is a Phosphoserine. A disordered region spans residues 142 to 188 (FTPPEKDGFPSGTPALNTKGSETSAVVTEEDDDDEDAAPPVIAPRPD). Thr-143 carries the post-translational modification Phosphothreonine. Phosphoserine is present on Ser-152. A phosphothreonine mark is found at Thr-154, Thr-159, and Thr-169. Polar residues predominate over residues 155–167 (PALNTKGSETSAV). Positions 169–178 (TEEDDDDEDA) are enriched in acidic residues. Ser-197 is modified (phosphoserine). Residues 204–228 (APVGDSNVDSGAKSSDKQKKKAKMT) are disordered. The short motif at 245 to 251 (PKKKYTR) is the Nuclear localization signal element. A Protein kinase domain is found at 249-499 (YTRYEKIGQG…SAKELLQHPF (251 aa)). ATP is bound by residues 255 to 263 (IGQGASGTV) and Lys-278. Catalysis depends on Arg-367, which acts as the Proton acceptor. Thr-402 bears the Phosphothreonine; by autocatalysis mark.

This sequence belongs to the protein kinase superfamily. STE Ser/Thr protein kinase family. STE20 subfamily. In terms of assembly, interacts tightly with GTP-bound but not GDP-bound CDC42/p21 and RAC1. Interacts with SH3MD4. Interacts with SCRIB. Interacts with ARHGEF7 and GIT1. PAK-2p34 interacts with ARHGAP10. Interacts with RAC1. Post-translationally, full-length PAK2 is autophosphorylated when activated by CDC42/p21. Following cleavage, both peptides, PAK-2p27 and PAK-2p34, become highly autophosphorylated. Autophosphorylation of PAK-2p27 can occur in the absence of any effectors and is dependent on phosphorylation of Thr-402, because PAK-2p27 is acting as an exogenous substrate. During apoptosis proteolytically cleaved by caspase-3 or caspase-3-like proteases to yield active PAK-2p34. In terms of processing, ubiquitinated, leading to its proteasomal degradation.

The protein resides in the cytoplasm. It localises to the nucleus. The protein localises to the perinuclear region. Its subcellular location is the membrane. It catalyses the reaction L-seryl-[protein] + ATP = O-phospho-L-seryl-[protein] + ADP + H(+). The enzyme catalyses L-threonyl-[protein] + ATP = O-phospho-L-threonyl-[protein] + ADP + H(+). Its activity is regulated as follows. Activated by binding small G proteins. Binding of GTP-bound CDC42 or RAC1 to the autoregulatory region releases monomers from the autoinhibited dimer, enables phosphorylation of Thr-402 and allows the kinase domain to adopt an active structure. Following caspase cleavage, autophosphorylated PAK-2p34 is constitutively active. Functionally, serine/threonine protein kinase that plays a role in a variety of different signaling pathways including cytoskeleton regulation, cell motility, cell cycle progression, apoptosis or proliferation. Acts as a downstream effector of the small GTPases CDC42 and RAC1. Activation by the binding of active CDC42 and RAC1 results in a conformational change and a subsequent autophosphorylation on several serine and/or threonine residues. Full-length PAK2 stimulates cell survival and cell growth. Phosphorylates MAPK4 and MAPK6 and activates the downstream target MAPKAPK5, a regulator of F-actin polymerization and cell migration. Phosphorylates JUN and plays an important role in EGF-induced cell proliferation. Phosphorylates many other substrates including histone H4 to promote assembly of H3.3 and H4 into nucleosomes, BAD, ribosomal protein S6, or MBP. Phosphorylates CASP7, thereby preventing its activity. Additionally, associates with ARHGEF7 and GIT1 to perform kinase-independent functions such as spindle orientation control during mitosis. On the other hand, apoptotic stimuli such as DNA damage lead to caspase-mediated cleavage of PAK2, generating PAK-2p34, an active p34 fragment that translocates to the nucleus and promotes cellular apoptosis involving the JNK signaling pathway. Caspase-activated PAK2 phosphorylates MKNK1 and reduces cellular translation. In Mus musculus (Mouse), this protein is Serine/threonine-protein kinase PAK 2 (Pak2).